The chain runs to 968 residues: Alanine--tRNA ligase, cytoplasmic (968 aa).

The residue at position 1 (Met-1) is an N-acetylmethionine. ATP-binding positions include Arg-77, His-95, Trp-176, and 214-216; that span reads IWN. L-alanine is bound by residues Asn-216 and Asp-239. Gly-243 provides a ligand contact to ATP. Phosphoserine occurs at positions 399 and 555. 4 residues coordinate Zn(2+): His-605, His-609, Cys-723, and His-727. The short motif at 750-763 is the Nuclear localization signal element; the sequence is RRIVAVTGAEAQKA. Lys-876 is modified (N6-acetyllysine). Residue Lys-943 is modified to N6,N6,N6-trimethyllysine; alternate. An N6,N6-dimethyllysine; alternate modification is found at Lys-943. Lys-943 carries the N6-methyllysine; alternate modification.

This sequence belongs to the class-II aminoacyl-tRNA synthetase family. As to quaternary structure, monomer. Interacts with ANKRD16; the interaction is direct. The cofactor is Zn(2+). ISGylated. Post-translationally, methylation at 'Lys-943' by METTL21C.

Its subcellular location is the cytoplasm. The protein resides in the nucleus. It carries out the reaction tRNA(Ala) + L-alanine + ATP = L-alanyl-tRNA(Ala) + AMP + diphosphate. The catalysed reaction is (S)-lactate + ATP + H(+) = (S)-lactoyl-AMP + diphosphate. The enzyme catalyses (S)-lactoyl-AMP + L-lysyl-[protein] = N(6)-[(S)-lactoyl]-L-lysyl-[protein] + AMP + 2 H(+). The protein lactyltransferase activity is inhibited by beta-alanine. Its function is as follows. Catalyzes the attachment of alanine to tRNA(Ala) in a two-step reaction: alanine is first activated by ATP to form Ala-AMP and then transferred to the acceptor end of tRNA(Ala). Also edits incorrectly charged tRNA(Ala) via its editing domain. In presence of high levels of lactate, also acts as a protein lactyltransferase that mediates lactylation of lysine residues in target proteins, such as TEAD1, TP53/p53 and YAP1. Protein lactylation takes place in a two-step reaction: lactate is first activated by ATP to form lactate-AMP and then transferred to lysine residues of target proteins. Acts as an inhibitor of TP53/p53 activity by catalyzing lactylation of TP53/p53. Acts as a positive regulator of the Hippo pathway by mediating lactylation of TEAD1 and YAP1. The protein is Alanine--tRNA ligase, cytoplasmic of Mus musculus (Mouse).